Consider the following 444-residue polypeptide: tRNA-2-methylthio-N(6)-dimethylallyladenosine synthase (444 aa).

The MTTase N-terminal domain occupies 4–120 (PTYYTITFGC…LGDLLAQVEA (117 aa)). [4Fe-4S] cluster is bound by residues C13, C49, C83, C155, C159, and C162. The 232-residue stretch at 141-372 (RDSQVTAWIN…RLVAEVAAAR (232 aa)) folds into the Radical SAM core domain. A TRAM domain is found at 374 to 438 (ARLLGQVQEV…AFSLTGEAVT (65 aa)).

The protein belongs to the methylthiotransferase family. MiaB subfamily. As to quaternary structure, monomer. It depends on [4Fe-4S] cluster as a cofactor.

It localises to the cytoplasm. It catalyses the reaction N(6)-dimethylallyladenosine(37) in tRNA + (sulfur carrier)-SH + AH2 + 2 S-adenosyl-L-methionine = 2-methylsulfanyl-N(6)-dimethylallyladenosine(37) in tRNA + (sulfur carrier)-H + 5'-deoxyadenosine + L-methionine + A + S-adenosyl-L-homocysteine + 2 H(+). Functionally, catalyzes the methylthiolation of N6-(dimethylallyl)adenosine (i(6)A), leading to the formation of 2-methylthio-N6-(dimethylallyl)adenosine (ms(2)i(6)A) at position 37 in tRNAs that read codons beginning with uridine. This is tRNA-2-methylthio-N(6)-dimethylallyladenosine synthase from Synechococcus sp. (strain JA-2-3B'a(2-13)) (Cyanobacteria bacterium Yellowstone B-Prime).